The following is a 778-amino-acid chain: DEK domain-containing chromatin-associated protein 4 (778 aa).

2 disordered regions span residues 1–334 and 475–689; these read MGEE…RPVR and LVNE…PSDE. Positions 14-26 are enriched in polar residues; sequence ANGTSSLQKTSDA. Basic and acidic residues-rich tracts occupy residues 40–95, 121–153, 165–185, and 209–243; these read EVQE…PEAD, AVMK…KLEG, EEKL…KVEN, and TNKG…TESK. A coiled-coil region spans residues 191 to 300; sequence KEEALKEKNE…KEDIKKSNKR (110 aa). The segment covering 244 to 286 has biased composition (acidic residues); it reads DENEDKEEEKEDEKEESMDDKEDEKEESNDDDKEDEKEESNDD. Basic and acidic residues-rich tracts occupy residues 287–296 and 303–323; these read KEDKKEDIKK and GKTE…DIEP. Residues 289–296 carry the Nuclear localization signal 1 motif; it reads DKKEDIKK. The short motif at 489–496 is the Nuclear localization signal 2 element; it reads PKKSSPAA. Positions 491 to 502 are enriched in low complexity; it reads KSSPAAGSSSSK. Residues 526–587 adopt a coiled-coil conformation; the sequence is DDESEEEKED…EESEEETKKK (62 aa). Composition is skewed to acidic residues over residues 527–553 and 560–582; these read DESE…EENE and SEDE…ESEE. Positions 618-625 match the Nuclear localization signal 3 motif; the sequence is PKKATQKR. Residues 621–631 are compositionally biased toward basic residues; it reads ATQKRSAGKRK. Over residues 678-689 the composition is skewed to basic and acidic residues; that stretch reads KGKDKNKEPSDE. In terms of domain architecture, DEK-C spans 685-740; it reads EPSDEELKTAIIDILKGVDFNTATFTDILKRLDAKFNISLASKKSSIKRMIQDELT. 2 DNA-binding regions span residues 703–717 and 732–736; these read DFNT…KRLD and KRMIQ. The stretch at 732–766 forms a coiled coil; it reads KRMIQDELTKLADEAEDEEGEEEDAEHEEEEEKEK. The tract at residues 741-778 is disordered; it reads KLADEAEDEEGEEEDAEHEEEEEKEKAKGSGGGEEVKA. The segment covering 745–763 has biased composition (acidic residues); the sequence is EAEDEEGEEEDAEHEEEEE. The segment covering 764 to 778 has biased composition (basic and acidic residues); the sequence is KEKAKGSGGGEEVKA.

In terms of assembly, interacts with DEK3.

Its subcellular location is the nucleus. It localises to the nucleolus. Chromatin-associated protein which contributes to the modulation of chromatin structure (such as super-helical structure of DNA) and function. Binds to chromatin of protein-coding genes throughout the genome to regulate nucleosome occupancy and chromatin accessibility, and to modulate the expression of target genes. The polypeptide is DEK domain-containing chromatin-associated protein 4 (Arabidopsis thaliana (Mouse-ear cress)).